Here is a 161-residue protein sequence, read N- to C-terminus: Phosphopantetheine adenylyltransferase (161 aa).

S8 is a substrate binding site. ATP-binding positions include 8 to 9 (SF) and H16. Positions 40, 72, and 86 each coordinate substrate. Residues 87–89 (GLR), E97, and 122–128 (FSFVSSS) contribute to the ATP site.

This sequence belongs to the bacterial CoaD family. In terms of assembly, homohexamer. It depends on Mg(2+) as a cofactor.

The protein resides in the cytoplasm. The enzyme catalyses (R)-4'-phosphopantetheine + ATP + H(+) = 3'-dephospho-CoA + diphosphate. It participates in cofactor biosynthesis; coenzyme A biosynthesis; CoA from (R)-pantothenate: step 4/5. Reversibly transfers an adenylyl group from ATP to 4'-phosphopantetheine, yielding dephospho-CoA (dPCoA) and pyrophosphate. The polypeptide is Phosphopantetheine adenylyltransferase (Thermotoga neapolitana (strain ATCC 49049 / DSM 4359 / NBRC 107923 / NS-E)).